We begin with the raw amino-acid sequence, 170 residues long: MVDTTKNTKLFTSYGVTTSKAINPDMAAKMISKAKRPLFVVGTGVLRPEILDRAVKIAKKANLPIAATGSSLNGFLDKDVDAKYINVHQLGFYLTDPAWPGLDGKGNYDTIIILEFKKYYINQVLSGTKNFSKVKSISIGKDYIQNATMSFGNISREEHFAALDELIDLL.

This sequence belongs to the CdhB family. As to quaternary structure, heterotetramer of two alpha and two epsilon subunits. The ACDS complex is made up of alpha, epsilon, beta, gamma and delta subunits with a probable stoichiometry of (alpha(2)epsilon(2))(4)-beta(8)-(gamma(1)delta(1))(8).

The protein operates within one-carbon metabolism; methanogenesis from acetate. Part of a complex that catalyzes the reversible cleavage of acetyl-CoA, allowing growth on acetate as sole source of carbon and energy. The alpha-epsilon subcomponent functions as a carbon monoxide dehydrogenase. The precise role of the epsilon subunit is unclear; it may have a stabilizing role within the alpha(2)epsilon(2) component and/or be involved in electron transfer to FAD during a potential FAD-mediated CO oxidation. The chain is Acetyl-CoA decarbonylase/synthase complex subunit epsilon 1 (cdhB1) from Methanosarcina thermophila.